The sequence spans 157 residues: Protein Smg homolog (157 aa).

The protein belongs to the Smg family.

The polypeptide is Protein Smg homolog (Photobacterium profundum (strain SS9)).